A 920-amino-acid chain; its full sequence is Alpha-L-rhamnosidase (920 aa).

The signal sequence occupies residues 1 to 19 (MCVVRTFWFAVLTVIFAVS). Residue C20 is the site of N-palmitoyl cysteine attachment. C20 is lipidated: S-diacylglycerol cysteine. Residues D500, 504 to 506 (RDE), D513, and W565 each bind alpha-L-rhamnose. E506 functions as the Proton donor in the catalytic mechanism. Catalysis depends on E779, which acts as the Proton acceptor. Residue H800 participates in alpha-L-rhamnose binding.

Belongs to the glycosyl hydrolase 78 family.

It is found in the cell membrane. It catalyses the reaction Hydrolysis of terminal non-reducing alpha-L-rhamnose residues in alpha-L-rhamnosides.. Alpha-L-rhamnosidase involved in ulvan degradation. Ulvan is the main polysaccharide component of the Ulvales (green seaweed) cell wall. It is composed of disaccharide building blocks comprising 3-sulfated rhamnose (Rha3S) linked to D-glucuronic acid (GlcA), L-iduronic acid (IduA), or D-xylose (Xyl). The enzyme is able to degrade p-nitrophenyl-alpha-L-rhamnopyranoside (PNP-Rha) in vitro. Incubating the enzyme with the products obtained after degradation with ulvan lyase and beta-glucuronyl hydrolase (i.e. the trisaccharides beta-alpha-L-Rha3S-IduA-Rha3S and beta-alpha-L-Rha3S-GlcA-Rha3S) showed no degradation, suggesting that the enzyme is active on neutral rhamnose and that desulfation of the oligosaccharide must be achieved before cleavage of rhamnose. The polypeptide is Alpha-L-rhamnosidase (Alteromonas sp. (strain LOR)).